A 340-amino-acid chain; its full sequence is Protein phosphatase PTC7 homolog fig (340 aa).

Positions 58 to 314 (RAQAETIQAP…DDITVVLASV (257 aa)) constitute a PPM-type phosphatase domain. Residues Asp-90, Gly-91, and Asp-236 each coordinate Mn(2+).

Belongs to the PP2C family. Mg(2+) serves as cofactor. Mn(2+) is required as a cofactor.

The catalysed reaction is O-phospho-L-seryl-[protein] + H2O = L-seryl-[protein] + phosphate. It catalyses the reaction O-phospho-L-threonyl-[protein] + H2O = L-threonyl-[protein] + phosphate. The sequence is that of Protein phosphatase PTC7 homolog fig from Drosophila pseudoobscura pseudoobscura (Fruit fly).